A 559-amino-acid polypeptide reads, in one-letter code: Probable D-2-hydroxyglutarate dehydrogenase, mitochondrial (559 aa).

A mitochondrion-targeting transit peptide spans 1–80; it reads MARRAAAGLL…MNFEVQKRSF (80 aa). The region spanning 131–310 is the FAD-binding PCMH-type domain; that stretch reads YKGSSQLLLL…TKIAILTPAK (180 aa).

Belongs to the FAD-binding oxidoreductase/transferase type 4 family. As to quaternary structure, homodimer. FAD is required as a cofactor.

The protein resides in the mitochondrion. The enzyme catalyses (R)-2-hydroxyglutarate + A = 2-oxoglutarate + AH2. Functionally, catalyzes the oxidation of D-2-hydroxyglutarate to alpha-ketoglutarate. This Oryza sativa subsp. indica (Rice) protein is Probable D-2-hydroxyglutarate dehydrogenase, mitochondrial (D2HGDH).